The chain runs to 1925 residues: Plexin-D1 (1925 aa).

Residues 1-21 (MARRAAGGAPPSARAAAAVPL) are compositionally biased toward low complexity. The tract at residues 1–26 (MARRAAGGAPPSARAAAAVPLRPRPH) is disordered. An N-terminal signal peptide occupies residues 1 to 48 (MARRAAGGAPPSARAAAAVPLRPRPHSRGPGLLPLPLLLLLGAARAGA). The Sema domain maps to 49–548 (LEIQRRFPSP…TSHQMARVKV (500 aa)). At 49 to 1271 (LEIQRRFPSP…TLQLGGSETA (1223 aa)) the chain is on the extracellular side. 2 cysteine pairs are disulfide-bonded: cysteine 106–cysteine 116 and cysteine 142–cysteine 150. N-linked (GlcNAc...) asparagine glycans are attached at residues asparagine 157 and asparagine 226. Intrachain disulfides connect cysteine 324–cysteine 447 and cysteine 347–cysteine 391. N-linked (GlcNAc...) asparagine glycosylation occurs at asparagine 483. 5 cysteine pairs are disulfide-bonded: cysteine 551–cysteine 568, cysteine 557–cysteine 602, cysteine 560–cysteine 577, cysteine 571–cysteine 583, and cysteine 639–cysteine 663. 3 IPT/TIG domains span residues 893–977 (PEIR…SREQ), 983–1065 (PTVH…NLTF), and 1071–1145 (PVIT…FING). N-linked (GlcNAc...) asparagine glycosylation is present at asparagine 967. Asparagine 1120 is a glycosylation site (N-linked (GlcNAc...) asparagine). Residues 1272–1292 (IVVSIVICSVLLLLSVVALFV) form a helical membrane-spanning segment. At 1293 to 1925 (FCTKSRRAER…NNIYECYSEA (633 aa)) the chain is on the cytoplasmic side.

It belongs to the plexin family. Interacts with NRP1 and SEMA4A. Interacts with SH3BP1; they dissociate upon SEMA3E binding to PLXND1 allowing SH3BP1 to transduce downstream signal through RAC1 inactivation. Detected in embryonic heart and vascular endothelium, brain, dorsal root ganglia, adrenal gland, lung mesenchyme, small intestine and in the ossification centers of vertebral bodies.

It is found in the cell membrane. The protein resides in the cell projection. Its subcellular location is the lamellipodium membrane. Functionally, cell surface receptor for SEMA4A and for class 3 semaphorins, such as SEMA3A, SEMA3C and SEMA3E. Plays an important role in cell-cell signaling, and in regulating the migration of a wide spectrum of cell types. Regulates the migration of thymocytes in the medulla. Regulates endothelial cell migration. Plays an important role in ensuring the specificity of synapse formation. Mediates anti-angiogenic signaling in response to SEMA3E. Required for normal development of the heart and vasculature. This Mus musculus (Mouse) protein is Plexin-D1 (Plxnd1).